Consider the following 86-residue polypeptide: MATKKAGGSSRNGRDSAGRRLGVKKADGQYVIPGNIIVRQRGTKIHPGMNVGLGKDHTIFALIEGRVEFLTKRNHKIVNVKEIAST.

The interval 1-22 is disordered; it reads MATKKAGGSSRNGRDSAGRRLG.

The protein belongs to the bacterial ribosomal protein bL27 family.

The polypeptide is Large ribosomal subunit protein bL27 (Rickettsia rickettsii (strain Iowa)).